Reading from the N-terminus, the 861-residue chain is Putative glutamate--cysteine ligase 2-2 (861 aa).

Residues 1 to 372 form a carboxylate-amine ligase region; it reads MSDARIVAVG…RDVPPAGAAA (372 aa). The unknown stretch occupies residues 373 to 861; the sequence is ALGSAPAVSA…GSKDTWIPRR (489 aa).

It in the N-terminal section; belongs to the glutamate--cysteine ligase type 2 family. YbdK subfamily.

It catalyses the reaction L-cysteine + L-glutamate + ATP = gamma-L-glutamyl-L-cysteine + ADP + phosphate + H(+). ATP-dependent carboxylate-amine ligase which exhibits weak glutamate--cysteine ligase activity. The chain is Putative glutamate--cysteine ligase 2-2 from Frankia casuarinae (strain DSM 45818 / CECT 9043 / HFP020203 / CcI3).